The following is a 383-amino-acid chain: uncharacterized protein (383 aa).

The protein belongs to the peptidase M20 family.

This is an uncharacterized protein from Staphylococcus epidermidis (strain ATCC 12228 / FDA PCI 1200).